The sequence spans 185 residues: Alpha-S1-casein (185 aa).

The signal sequence occupies residues 1–15 (MRLLILTCLVAVALA). Ser31, Ser33, Ser41, Ser71, Ser85, Ser86, Ser88, Ser89, Ser90, and Ser91 each carry phosphoserine.

This sequence belongs to the alpha-casein family. As to quaternary structure, heteromultimers of alpha-s1 casein and kappa-casein; disulfide-linked. Not glycosylated. As to expression, mammary gland specific. Secreted in milk.

It is found in the secreted. In terms of biological role, important role in the capacity of milk to transport calcium phosphate. Casoxin D acts as opioid antagonist and has vasorelaxing activity mediated by bradykinin B1 receptors. This is Alpha-S1-casein (CSN1S1) from Homo sapiens (Human).